We begin with the raw amino-acid sequence, 342 residues long: Anthranilate phosphoribosyltransferase (342 aa).

Residues G79, 82-83 (GD), T87, 89-92 (NVST), 107-115 (KHGNRAATS), and S119 each bind 5-phospho-alpha-D-ribose 1-diphosphate. G79 provides a ligand contact to anthranilate. A Mg(2+)-binding site is contributed by S91. N110 is an anthranilate binding site. Anthranilate is bound at residue R165. Mg(2+) is bound by residues D224 and E225.

This sequence belongs to the anthranilate phosphoribosyltransferase family. As to quaternary structure, homodimer. Requires Mg(2+) as cofactor.

The catalysed reaction is N-(5-phospho-beta-D-ribosyl)anthranilate + diphosphate = 5-phospho-alpha-D-ribose 1-diphosphate + anthranilate. The protein operates within amino-acid biosynthesis; L-tryptophan biosynthesis; L-tryptophan from chorismate: step 2/5. In terms of biological role, catalyzes the transfer of the phosphoribosyl group of 5-phosphorylribose-1-pyrophosphate (PRPP) to anthranilate to yield N-(5'-phosphoribosyl)-anthranilate (PRA). The polypeptide is Anthranilate phosphoribosyltransferase (Rubrobacter xylanophilus (strain DSM 9941 / JCM 11954 / NBRC 16129 / PRD-1)).